The chain runs to 248 residues: tRNA (guanine-N(1)-)-methyltransferase (248 aa).

Residues G113 and I133 to L138 each bind S-adenosyl-L-methionine.

It belongs to the RNA methyltransferase TrmD family. In terms of assembly, homodimer.

It localises to the cytoplasm. It catalyses the reaction guanosine(37) in tRNA + S-adenosyl-L-methionine = N(1)-methylguanosine(37) in tRNA + S-adenosyl-L-homocysteine + H(+). Specifically methylates guanosine-37 in various tRNAs. The polypeptide is tRNA (guanine-N(1)-)-methyltransferase (Shewanella piezotolerans (strain WP3 / JCM 13877)).